The following is a 91-amino-acid chain: Large ribosomal subunit protein bL27 (91 aa).

It belongs to the bacterial ribosomal protein bL27 family. As to quaternary structure, part of the 50S ribosomal subunit. Contacts protein L18.

Its function is as follows. Binds the 5S and 23S rRNAs and also the tRNA in the P site. This Deinococcus radiodurans (strain ATCC 13939 / DSM 20539 / JCM 16871 / CCUG 27074 / LMG 4051 / NBRC 15346 / NCIMB 9279 / VKM B-1422 / R1) protein is Large ribosomal subunit protein bL27 (rpmA).